Consider the following 716-residue polypeptide: Fatty acid oxidation complex subunit alpha (716 aa).

Residues 1–189 (MIYQSPTIQV…KVGAVDAVVA (189 aa)) are enoyl-CoA hydratase/isomerase. Residue Asp-296 coordinates substrate. The interval 311-716 (KDVKSAAVLG…AANNGSYYQA (406 aa)) is 3-hydroxyacyl-CoA dehydrogenase. NAD(+)-binding positions include Met-324, Asp-343, 400 to 402 (VVE), Lys-407, and Ser-429. His-450 functions as the For 3-hydroxyacyl-CoA dehydrogenase activity in the catalytic mechanism. Residue Asn-453 participates in NAD(+) binding. 2 residues coordinate substrate: Asn-500 and Tyr-660.

This sequence in the N-terminal section; belongs to the enoyl-CoA hydratase/isomerase family. In the C-terminal section; belongs to the 3-hydroxyacyl-CoA dehydrogenase family. As to quaternary structure, heterotetramer of two alpha chains (FadB) and two beta chains (FadA).

It carries out the reaction a (3S)-3-hydroxyacyl-CoA + NAD(+) = a 3-oxoacyl-CoA + NADH + H(+). The catalysed reaction is a (3S)-3-hydroxyacyl-CoA = a (2E)-enoyl-CoA + H2O. The enzyme catalyses a 4-saturated-(3S)-3-hydroxyacyl-CoA = a (3E)-enoyl-CoA + H2O. It catalyses the reaction (3S)-3-hydroxybutanoyl-CoA = (3R)-3-hydroxybutanoyl-CoA. It carries out the reaction a (3Z)-enoyl-CoA = a 4-saturated (2E)-enoyl-CoA. The catalysed reaction is a (3E)-enoyl-CoA = a 4-saturated (2E)-enoyl-CoA. The protein operates within lipid metabolism; fatty acid beta-oxidation. Functionally, involved in the aerobic and anaerobic degradation of long-chain fatty acids via beta-oxidation cycle. Catalyzes the formation of 3-oxoacyl-CoA from enoyl-CoA via L-3-hydroxyacyl-CoA. It can also use D-3-hydroxyacyl-CoA and cis-3-enoyl-CoA as substrate. The sequence is that of Fatty acid oxidation complex subunit alpha from Shewanella sp. (strain ANA-3).